Reading from the N-terminus, the 313-residue chain is MTEFKHETVLLKEATAALAVKPAGTYVDATLGRGGHTRQILNHLTTGRLIAFDQDEAAIATVTADFGTLPKQLTLVHRNFRDLTDALTTLGITEVDGILYDLGVSSPQFDDSKRGFSYRFDAPLDMRMDQRQTLDAKTIVNEWPYADLVRIFSRYGEEHFSKQIARRIEQARTVQPITTTFQLVELIKAGIPAKARRTGGHPAKKVFQAIRIAVNDELSALESSLEQALKLINVGGRISVITFQSLEDRLVKTMFKEVSSVQDVPRGLPVIPASAQPNYRLVNRKPILPSEEELAVNHRAHSAKLRVIEKIHD.

S-adenosyl-L-methionine is bound by residues 34-36 (GGH), D53, F80, D101, and Q108.

The protein belongs to the methyltransferase superfamily. RsmH family.

It is found in the cytoplasm. It carries out the reaction cytidine(1402) in 16S rRNA + S-adenosyl-L-methionine = N(4)-methylcytidine(1402) in 16S rRNA + S-adenosyl-L-homocysteine + H(+). Functionally, specifically methylates the N4 position of cytidine in position 1402 (C1402) of 16S rRNA. The sequence is that of Ribosomal RNA small subunit methyltransferase H from Lacticaseibacillus paracasei (strain ATCC 334 / BCRC 17002 / CCUG 31169 / CIP 107868 / KCTC 3260 / NRRL B-441) (Lactobacillus paracasei).